Reading from the N-terminus, the 318-residue chain is Ferredoxin--NADP reductase (318 aa).

Residues D33, Q41, Y46, V84, F115, D276, and T316 each contribute to the FAD site.

It belongs to the ferredoxin--NADP reductase type 2 family. As to quaternary structure, homodimer. FAD serves as cofactor.

It catalyses the reaction 2 reduced [2Fe-2S]-[ferredoxin] + NADP(+) + H(+) = 2 oxidized [2Fe-2S]-[ferredoxin] + NADPH. This chain is Ferredoxin--NADP reductase, found in Lactobacillus johnsonii (strain CNCM I-12250 / La1 / NCC 533).